Here is a 1134-residue protein sequence, read N- to C-terminus: Isoleucine--tRNA ligase (1134 aa).

The 'HIGH' region motif lies at 52–62; it reads PFANGLPHYGH. The short motif at 656-660 is the 'KMSKS' region element; the sequence is KLSKR. An ATP-binding site is contributed by Lys659.

This sequence belongs to the class-I aminoacyl-tRNA synthetase family. IleS type 2 subfamily. As to quaternary structure, monomer. It depends on Zn(2+) as a cofactor.

It is found in the cytoplasm. It carries out the reaction tRNA(Ile) + L-isoleucine + ATP = L-isoleucyl-tRNA(Ile) + AMP + diphosphate. Functionally, catalyzes the attachment of isoleucine to tRNA(Ile). As IleRS can inadvertently accommodate and process structurally similar amino acids such as valine, to avoid such errors it has two additional distinct tRNA(Ile)-dependent editing activities. One activity is designated as 'pretransfer' editing and involves the hydrolysis of activated Val-AMP. The other activity is designated 'posttransfer' editing and involves deacylation of mischarged Val-tRNA(Ile). In Wolbachia sp. subsp. Brugia malayi (strain TRS), this protein is Isoleucine--tRNA ligase.